Consider the following 439-residue polypeptide: (p)ppApp synthetase toxin Tas1 (439 aa).

It is found in the secreted. It carries out the reaction AMP + ATP = adenosine 3'-diphosphate,5'-phosphate + AMP + H(+). The enzyme catalyses ADP + ATP = adenosine 3'-diphosphate,5'-diphosphate + AMP. It catalyses the reaction 2 ATP = adenosine 3'-diphosphate,5'-triphosphate + AMP. In terms of biological role, type VI secretion exported toxin that pyrophosphorylates adenosine nucleotides to produce (p)ppApp. Thereby, depletes cellular ADP and ATP to dysregulate central metabolism in competitor cells. This chain is (p)ppApp synthetase toxin Tas1 (tas1), found in Pseudomonas aeruginosa (strain UCBPP-PA14).